A 224-amino-acid polypeptide reads, in one-letter code: UPF0758 protein mma_2551 (224 aa).

In terms of domain architecture, MPN spans 102–224 (SLNSPQAVKK…VYSFAEHGHL (123 aa)). His-173, His-175, and Asp-186 together coordinate Zn(2+). Positions 173 to 186 (HNHPSGSSEPSAAD) match the JAMM motif motif.

This sequence belongs to the UPF0758 family.

This chain is UPF0758 protein mma_2551, found in Janthinobacterium sp. (strain Marseille) (Minibacterium massiliensis).